Here is a 679-residue protein sequence, read N- to C-terminus: WD repeat-containing protein 48 homolog (679 aa).

WD repeat units follow at residues 26–65 (QHRN…NEKY), 71–110 (HHND…CMST), 113–152 (THRD…ALTA), 164–203 (GSKD…RSMK), 206–245 (GHTE…CIQT), 248–287 (VHKE…NKML), 290–329 (EEKA…RCVL), and 349–388 (KGGA…KKEE). The segment at 594 to 615 (PSAGNANNSLQNSQSDANSEGS) is disordered.

Belongs to the WD repeat WDR48 family. As to quaternary structure, catalytic component of the Usp12-46 deubiquitylase complex consisting of Usp12-46, Wdr20 and Uaf1; regulatory subunit that, together wtih Wdr20, stabilizes Usp12-46. The Usp12-46 deubiquitylase complex associates with arr/arrow; the interaction leads to deubiquitination and stabilization of arr/arrow.

Functionally, regulatory component of the Usp12-46 deubiquitylase complex. activates deubiquitination by increasing the catalytic turnover without increasing the affinity of deubiquitinating enzymes for the substrate. The complex deubiquitylates the wg/wingless-signaling receptor arr/arrow, which stabilizes the receptor and increases its concentration at the cell surface; this enhances the sensitivity of cells to wg/wingless-signal stimulation. This increases the amplitude and spatial range of the signaling response to the wg/wingless morphogen gradient, facilitating the precise concentration-dependent regulation of its target genes. Together with Wdr20 and Usp12-46 required for wg/wingless-mediated signaling in the wing imaginal disc and for wg/wingless-dependent regulation of intestinal stem cell proliferation. The polypeptide is WD repeat-containing protein 48 homolog (Drosophila mojavensis (Fruit fly)).